The primary structure comprises 668 residues: RNA-binding protein PIN4 (668 aa).

Residues 1-77 (METSSFENAP…NLNNAPTNGA (77 aa)) form a disordered region. Low complexity predominate over residues 8–23 (NAPPAAINDAQDNNIN). The segment covering 24–36 (TETNDQETNQQSI) has biased composition (polar residues). Positions 37–46 (ETRDAIDKEN) are enriched in basic and acidic residues. A compositionally biased stretch (polar residues) spans 47-74 (GVQTETGENSAKNAEQNVSSTNLNNAPT). A Phosphoserine modification is found at Ser-56. Positions 85–163 (NAIVIKNIPF…RKLKVEYKKM (79 aa)) constitute an RRM domain. The segment covering 168 to 188 (ERERIEREKREKRGQLEEQHR) has biased composition (basic and acidic residues). The interval 168–214 (ERERIEREKREKRGQLEEQHRSSSNLSLDSLSKMSGSGNNNTSNNQL) is disordered. Phosphoserine is present on residues Ser-189, Ser-191, Ser-194, and Ser-197. Positions 189-212 (SSSNLSLDSLSKMSGSGNNNTSNN) are enriched in low complexity. Thr-305 bears the Phosphothreonine mark. 2 disordered regions span residues 374–398 (QQQGQMTSAHPLQPNSTGGSMNRSQ) and 420–570 (VNNS…QRVP). Phosphoserine is present on Ser-393. Low complexity predominate over residues 420-449 (VNNSSNSNTINSNNGNGNNVIINNNSASST). A compositionally biased stretch (polar residues) spans 450 to 478 (PKISSQGQFSMQPTLTSPKMNIHHSSQYN). Ser-466 carries the post-translational modification Phosphoserine. Over residues 479 to 508 (SADQPQQPQPQTQQNVQSAAQQQQSFLRQQ) the composition is skewed to low complexity. Positions 509 to 551 (ATLTPSSRIPSGYSANHYQINSVNPLLRNSQISPPNSQIPINS) are enriched in polar residues. At Ser-541 the chain carries Phosphoserine. The segment covering 552 to 567 (QTLSQAQPPAQSQTQQ) has biased composition (low complexity). Phosphoserine occurs at positions 636, 638, 640, 653, and 655.

As to quaternary structure, interacts with RAD53. Hyperphosphorylated in response to DNA damage by MEC1.

It localises to the cytoplasm. In terms of biological role, involved in normal G2/M phase transition of the mitotic cell cycle. In association with RAD53, also involved in checkpoint control in response to DNA damage. This is RNA-binding protein PIN4 (PIN4) from Saccharomyces cerevisiae (strain ATCC 204508 / S288c) (Baker's yeast).